The primary structure comprises 300 residues: Platelet-derived growth factor D (300 aa).

The CUB domain maps to 1–114 (QVTGNGHVQS…PGFKIYYSFV (114 aa)). Cys53 and Cys75 are oxidised to a cystine. Asn220 carries N-linked (GlcNAc...) asparagine glycosylation.

Belongs to the PDGF/VEGF growth factor family. As to quaternary structure, homodimer; disulfide-linked. Interacts with PDGFRB homodimers, and with heterodimers formed by PDGFRA and PDGFRB. Post-translationally, activated by proteolytic cleavage. Proteolytic removal of the N-terminal CUB domain releasing the core domain is necessary for unmasking the receptor-binding epitopes of the core domain. Cleavage after Arg-191 or Arg-193 by urokinase plasminogen activator gives rise to the active form.

The protein localises to the secreted. In terms of biological role, growth factor that plays an essential role in the regulation of embryonic development, cell proliferation, cell migration, survival and chemotaxis. Potent mitogen for cells of mesenchymal origin. Plays an important role in wound healing. Induces macrophage recruitment, increased interstitial pressure, and blood vessel maturation during angiogenesis. Can initiate events that lead to a mesangial proliferative glomerulonephritis, including influx of monocytes and macrophages and production of extracellular matrix. This is Platelet-derived growth factor D (PDGFD) from Oryctolagus cuniculus (Rabbit).